A 256-amino-acid polypeptide reads, in one-letter code: Floral homeotic protein APETALA 1-1 (256 aa).

An MADS-box domain is found at Met-1–Ser-61. The 91-residue stretch at Asn-88–Val-178 folds into the K-box domain.

In terms of assembly, homodimer capable of binding to CArG-box sequences. In terms of tissue distribution, expressed in some of the meristems of arrest-stage broccoli heads.

The protein resides in the nucleus. Its function is as follows. Transcription factor that promotes early floral meristem identity in synergy with LEAFY. Displays a redundant function with CAULIFLOWER in the up-regulation of LEAFY. Required subsequently for the transition of an inflorescence meristem into a floral meristem, and for the normal development of sepals and petals in flowers. Regulates positively B class homeotic proteins. In Brassica oleracea var. italica (Broccoli), this protein is Floral homeotic protein APETALA 1-1 (1AP1).